The primary structure comprises 391 residues: Phosphoglycerate kinase (391 aa).

Substrate-binding positions include 21-23 (DLN), Arg36, 59-62 (HLGR), Arg113, and Arg146. Residues Lys197, Glu319, and 345–348 (GGDT) each bind ATP.

It belongs to the phosphoglycerate kinase family. Monomer.

The protein resides in the cytoplasm. It carries out the reaction (2R)-3-phosphoglycerate + ATP = (2R)-3-phospho-glyceroyl phosphate + ADP. It participates in carbohydrate degradation; glycolysis; pyruvate from D-glyceraldehyde 3-phosphate: step 2/5. The sequence is that of Phosphoglycerate kinase from Shewanella sediminis (strain HAW-EB3).